Consider the following 543-residue polypeptide: MESLLRQLSICNELIAQGSCTAGHIDWLNDFCATFLDFASELKAHLPEVAPRWPAEGGTNIDVETIFLCLTQVVTCITQLERTINIEGASARATPMTRLHFLDRIDWCVRRIIFCLSQLHLQRANDQSNSLEDHTFVELMDLALDHLEAFMETLANTTPTNLLCIVEENELQLGSIVNHIVRHALAFANVALEADKKALSELCETLLSECATFLEDSGELNPGHRKLEGLSLERALYGLETYLNEALLHLIFACIVELENTPISKLRHAPDSEFTEQLVLDFDTNMDRIQQIGVLAIAFSQDIKTKTIVRSCLASLESLDACIVPALQSSALHPHHADILEHHFNEEILIFRNLIHEIIDSRSLINNYLDMLAESIHLAVKRPPRDHLLIVQMGSVLEEHFRLPVNYSELSQLDGKRLHTDFMLILSECLAVVSSPLGEPKRIVKRLKILYSVLAKLRHAIDRNKYVHEDSSASVPNVSSRRQFTNATRTLLRMKSKSKRQRSFVRQRRDCLVPNPQNCSISNSISHQGDLISFQLTEILRIN.

The protein resides in the cytoplasm. It localises to the cell membrane. Required for the cellularization of the syncytial blastoderm embryo. Involved in the localization of the actin filaments just prior to and during plasma membrane invagination. Sry-alpha together with nullo and bnk may provide auxiliary functions, by acting both to stabilize a large and dynamic microfilament structure and regulate its functions. The sequence is that of Serendipity locus protein alpha (Sry-alpha) from Drosophila subobscura (Fruit fly).